Reading from the N-terminus, the 252-residue chain is Adenylate kinase (252 aa).

An ATP-binding site is contributed by 47 to 52 (GSGKGT). An NMP region spans residues 67–96 (ATGDMLRSQVKQGTPLGLEAKKIMDQGGLV). AMP-binding positions include Thr68, Arg73, 94–96 (GLV), 123–126 (GFPR), and Gln130. Residues 164 to 201 (GRLVHPASGRSYHKIFSPPKKEMTDDITGEPLVQRSDD) are LID. ATP contacts are provided by residues Arg165 and 174–175 (SY). Residues Arg198 and Arg209 each coordinate AMP. Gln237 provides a ligand contact to ATP.

The protein belongs to the adenylate kinase family. AK2 subfamily. As to quaternary structure, monomer.

Its subcellular location is the cytoplasm. It localises to the cytosol. The protein localises to the mitochondrion intermembrane space. The catalysed reaction is AMP + ATP = 2 ADP. In terms of biological role, catalyzes the reversible transfer of the terminal phosphate group between ATP and AMP. Plays an important role in cellular energy homeostasis and in adenine nucleotide metabolism. Adenylate kinase activity is critical for regulation of the phosphate utilization and the AMP de novo biosynthesis pathways. In Lodderomyces elongisporus (strain ATCC 11503 / CBS 2605 / JCM 1781 / NBRC 1676 / NRRL YB-4239) (Yeast), this protein is Adenylate kinase.